We begin with the raw amino-acid sequence, 339 residues long: UDP-N-acetylenolpyruvoylglucosamine reductase (339 aa).

The 171-residue stretch at 19–189 (VDVRAQLFAE…LRVRFALNRV (171 aa)) folds into the FAD-binding PCMH-type domain. Arg-166 is an active-site residue. The active-site Proton donor is Ser-239. Glu-335 is a catalytic residue.

It belongs to the MurB family. It depends on FAD as a cofactor.

The protein localises to the cytoplasm. The catalysed reaction is UDP-N-acetyl-alpha-D-muramate + NADP(+) = UDP-N-acetyl-3-O-(1-carboxyvinyl)-alpha-D-glucosamine + NADPH + H(+). It participates in cell wall biogenesis; peptidoglycan biosynthesis. Its function is as follows. Cell wall formation. In Pseudomonas fluorescens (strain Pf0-1), this protein is UDP-N-acetylenolpyruvoylglucosamine reductase.